The sequence spans 421 residues: Glutamate dehydrogenase (421 aa).

Lys-105 is an active-site residue. 220–226 (GYGNAGY) serves as a coordination point for NAD(+).

It belongs to the Glu/Leu/Phe/Val dehydrogenases family. Homohexamer.

The protein resides in the cytoplasm. Its subcellular location is the chromosome. The enzyme catalyses L-glutamate + NAD(+) + H2O = 2-oxoglutarate + NH4(+) + NADH + H(+). It carries out the reaction L-glutamate + NADP(+) + H2O = 2-oxoglutarate + NH4(+) + NADPH + H(+). This is Glutamate dehydrogenase (gdhA) from Thermococcus kodakarensis (strain ATCC BAA-918 / JCM 12380 / KOD1) (Pyrococcus kodakaraensis (strain KOD1)).